We begin with the raw amino-acid sequence, 282 residues long: tRNA (guanine-N(1)-)-methyltransferase (282 aa).

145–150 contributes to the S-adenosyl-L-methionine binding site; that stretch reads IGDYVL.

This sequence belongs to the RNA methyltransferase TrmD family. In terms of assembly, homodimer.

It is found in the cytoplasm. It catalyses the reaction guanosine(37) in tRNA + S-adenosyl-L-methionine = N(1)-methylguanosine(37) in tRNA + S-adenosyl-L-homocysteine + H(+). Its function is as follows. Specifically methylates guanosine-37 in various tRNAs. The polypeptide is tRNA (guanine-N(1)-)-methyltransferase (Streptomyces avermitilis (strain ATCC 31267 / DSM 46492 / JCM 5070 / NBRC 14893 / NCIMB 12804 / NRRL 8165 / MA-4680)).